Reading from the N-terminus, the 185-residue chain is Elongation factor P (185 aa).

This sequence belongs to the elongation factor P family.

The protein resides in the cytoplasm. It participates in protein biosynthesis; polypeptide chain elongation. Functionally, involved in peptide bond synthesis. Stimulates efficient translation and peptide-bond synthesis on native or reconstituted 70S ribosomes in vitro. Probably functions indirectly by altering the affinity of the ribosome for aminoacyl-tRNA, thus increasing their reactivity as acceptors for peptidyl transferase. This is Elongation factor P from Lactococcus lactis subsp. cremoris (strain MG1363).